The primary structure comprises 618 residues: UvrABC system protein C (618 aa).

In terms of domain architecture, GIY-YIG spans 13–92 (DKPGVYLMKN…IKKYRPKYNI (80 aa)). One can recognise a UVR domain in the interval 204 to 239 (LDIVENFKLNMEKAAENLEFEKAAMLRDKINIIEKI).

It belongs to the UvrC family. As to quaternary structure, interacts with UvrB in an incision complex.

It is found in the cytoplasm. Functionally, the UvrABC repair system catalyzes the recognition and processing of DNA lesions. UvrC both incises the 5' and 3' sides of the lesion. The N-terminal half is responsible for the 3' incision and the C-terminal half is responsible for the 5' incision. The chain is UvrABC system protein C from Clostridium botulinum (strain Okra / Type B1).